Here is a 705-residue protein sequence, read N- to C-terminus: tRNA 5-methylaminomethyl-2-thiouridine biosynthesis bifunctional protein MnmC (705 aa).

Residues 1–241 form a tRNA (mnm(5)s(2)U34)-methyltransferase region; it reads MTIKTADIQF…KREMLAGIIA (241 aa). The segment at 289 to 705 is FAD-dependent cmnm(5)s(2)U34 oxidoreductase; the sequence is IGAGIAGASM…LIRQLIRREV (417 aa).

The protein in the N-terminal section; belongs to the methyltransferase superfamily. tRNA (mnm(5)s(2)U34)-methyltransferase family. This sequence in the C-terminal section; belongs to the DAO family. The cofactor is FAD.

It localises to the cytoplasm. The enzyme catalyses 5-aminomethyl-2-thiouridine(34) in tRNA + S-adenosyl-L-methionine = 5-methylaminomethyl-2-thiouridine(34) in tRNA + S-adenosyl-L-homocysteine + H(+). In terms of biological role, catalyzes the last two steps in the biosynthesis of 5-methylaminomethyl-2-thiouridine (mnm(5)s(2)U) at the wobble position (U34) in tRNA. Catalyzes the FAD-dependent demodification of cmnm(5)s(2)U34 to nm(5)s(2)U34, followed by the transfer of a methyl group from S-adenosyl-L-methionine to nm(5)s(2)U34, to form mnm(5)s(2)U34. The chain is tRNA 5-methylaminomethyl-2-thiouridine biosynthesis bifunctional protein MnmC from Pseudoalteromonas atlantica (strain T6c / ATCC BAA-1087).